We begin with the raw amino-acid sequence, 1164 residues long: Nuclear exosome regulator NRDE2 (1164 aa).

Disordered regions lie at residues 1 to 25 (MALF…ELDW) and 39 to 149 (LSQQ…GHRF). The residue at position 2 (Ala2) is an N-acetylalanine. Basic and acidic residues predominate over residues 61-73 (LKSESSDESDTNK). Positions 61-383 (LKSESSDESD…IESNQSSVDL (323 aa)) form a coiled coil. A compositionally biased stretch (basic residues) spans 74–103 (KLKQTSRKKKKEKKKKRKHQHHKKTKRKHG). The span at 110–133 (SETDTDSEKDKPSRGVGGSKKESE) shows a compositional bias: basic and acidic residues. The MID/MTR4-interacting domain stretch occupies residues 163–266 (FRTDKKPDPA…KDLEDAAPVT (104 aa)). A disordered region spans residues 279 to 305 (TTHWLQGQGPPEQESKQPDAQPDSESA). 5 HAT repeats span residues 305–337 (AALK…FQDE), 395–427 (WEPS…FCQS), 758–792 (SQGK…LEWL), 978–1010 (YPLA…IQNK), and 1067–1101 (GLMH…FLVS).

This sequence belongs to the NRDE2 family. In terms of assembly, interacts with MTREX; the interaction is direct and stabilizes NRDE2. Interacts with EXOSC10, EFTUD2 and EIF4A3.

It is found in the nucleus speckle. It localises to the nucleus. The protein localises to the nucleolus. The protein resides in the nucleoplasm. Its function is as follows. Protein of the nuclear speckles that regulates RNA degradation and export from the nucleus through its interaction with MTREX an essential factor directing various RNAs to exosomal degradation. Changes the conformation of MTREX, precluding its association with the nuclear exosome and interaction with proteins required for its function in RNA exosomal degradation. Negatively regulates, for instance, the degradation of mRNAs and lncRNAs by inhibiting their MTREX-mediated recruitment to nuclear exosome. By preventing the degradation of RNAs in the nucleus, it promotes their export to the cytoplasm. U5 snRNP-associated RNA splicing factor which is required for efficient splicing of CEP131 pre-mRNA and plays an important role in centrosome maturation, integrity and function during mitosis. Suppresses intron retention in a subset of pre-mRNAs containing short, GC-rich introns with relatively weak 5' and 3' splice sites. Plays a role in DNA damage response. This is Nuclear exosome regulator NRDE2 from Homo sapiens (Human).